The sequence spans 212 residues: MLSSVVFWGLIALIGTSRGSYPFSHSMKPHLHPRLYHGCYGDIMTMKTSGATCDANSVMNCGIRGSEMFAEMDLRAIKPYQTLIKEVGQRHCVDPAVIAAIISRESHGGSVLQDGWDHRGLKFGLMQLDKQTYHPVGAWDSKEHLSQATGILTERIKAIQKKFPTWSVAQHLKGGLSAFKSGIEAIATPSDIDNDFVNDIIARAKFYKRQSF.

The first 19 residues, 1–19, serve as a signal peptide directing secretion; the sequence is MLSSVVFWGLIALIGTSRG. Disulfide bonds link Cys39–Cys92 and Cys53–Cys61. Glu105 is an active-site residue.

The protein belongs to the glycosyl hydrolase 23 family. Strong expression detected in the eye and weak expression in the testis. No expression is observed in any other tissues.

Its subcellular location is the secreted. In terms of biological role, may act as a potent antibacterial protein that may play a role in the innate immunity. The polypeptide is Lysozyme g-like protein 2 (LYG2) (Homo sapiens (Human)).